Consider the following 1096-residue polypeptide: MSRSAIQVAKTATYLPDLVEVQRASFKWFLEKGLIEELENFSPITDYTGKLELHFIGSEYRLKRPRHDVEEAKRRDATFASQMYVTCRLVNKETGEIKEQEVFIGELPLMTERGTFIINGAERVIVNQIVRSPGVYFKDEQDKNGRRTYNASVIPNRGAWLKFETDKNDLLHVRVDKTRKINAHVLMRAMGLSDNDVIDKLRHPEYYKKSIQAADDEGISSEDQALLELYKKLRPGEPPSVSGGQQLLQSRFFDAKRYDLGRVGRYKINKKLRLTIPDSVRTLTHEDVLSTIDYLINLELDVGGATLDDIDHLGNRRVRSVGELLQNQVRVGLNRLERIIKERMTVGETDSLTPAQLVNPKPLVAAIKEFFGSSQLSQFMDQTNPLAELTHKRRISALGPGGLTRERAGFAVRDIHPSHYGRLCPIETPEGPNAGLINSLATHARVNSYGFIETPFWKVEEGRVIKVGDPIYLSADLEDECRVAPGDVATDKDGMILADLIPVRYRQDFEKVPPAQVDYVQLSPVQVISVATSLIPFVEHDDANRALMGSNMQRQAVPLLRPERPLVGTGLETQVARDSGMVPISQVNGTVTYVDANSIVVTDDEGGEHLHELQKYQRSNQDTCLNQRPIVRNGDKVIIGQVLADGSACEGGEIALGQNVLIAYMPWEGYNYEDAILVSERLVKDDLYTSVHIEKYEIEARQTKLGPEEITREIPNIAEESLGNLDEMGIIRVGAFVESGDILVGKVTPKGESDQPPEEKLLRAIFGEKARDVRDNSLRVPSTEKGRVVDVRIYTREQGDELPPGANMVVRVYVAQRRKIQVGDKMAGRHGNKGIISRILPREDMPYLPDGTPVDIVLNPLGVPSRMNVGQVFELLMGWAAANLDCRVKVVPFDEMYGAEKSYETVQLYLKEAAKQPGKEWVFNPDDPGKLLLRDGRTGEAFDQPVAVGYSHFLKLVHLVDDKIHARSTGPYSLVTQQPLGGKAQQGGQRLGEMEVWALEAYGAAYTLQELLTVKSDDMQGRNEALNAIVKGKPIPRPGTPESFKVLMRELQSLGLDIGVYTDEGKEVDLMQDVNPRRSTPSRPTYESLGSDYQED.

The segment at 1069 to 1096 (DLMQDVNPRRSTPSRPTYESLGSDYQED) is disordered.

It belongs to the RNA polymerase beta chain family. In cyanobacteria the RNAP catalytic core is composed of 2 alpha, 1 beta, 1 beta', 1 gamma and 1 omega subunit. When a sigma factor is associated with the core the holoenzyme is formed, which can initiate transcription.

It carries out the reaction RNA(n) + a ribonucleoside 5'-triphosphate = RNA(n+1) + diphosphate. DNA-dependent RNA polymerase catalyzes the transcription of DNA into RNA using the four ribonucleoside triphosphates as substrates. The polypeptide is DNA-directed RNA polymerase subunit beta (Prochlorococcus marinus (strain SARG / CCMP1375 / SS120)).